The sequence spans 364 residues: Nicotinate-nucleotide--dimethylbenzimidazole phosphoribosyltransferase (364 aa).

Residue Glu332 is the Proton acceptor of the active site.

It belongs to the CobT family.

The enzyme catalyses 5,6-dimethylbenzimidazole + nicotinate beta-D-ribonucleotide = alpha-ribazole 5'-phosphate + nicotinate + H(+). It participates in nucleoside biosynthesis; alpha-ribazole biosynthesis; alpha-ribazole from 5,6-dimethylbenzimidazole: step 1/2. Catalyzes the synthesis of alpha-ribazole-5'-phosphate from nicotinate mononucleotide (NAMN) and 5,6-dimethylbenzimidazole (DMB). The polypeptide is Nicotinate-nucleotide--dimethylbenzimidazole phosphoribosyltransferase (Salinispora tropica (strain ATCC BAA-916 / DSM 44818 / JCM 13857 / NBRC 105044 / CNB-440)).